Here is a 409-residue protein sequence, read N- to C-terminus: Beta-arrestin-2 (409 aa).

Tyr-48 carries the phosphotyrosine modification. Pro-176 and Pro-181 each carry hydroxyproline; by PHD2. Residues Ala-240–Cys-409 form an interaction with TRAF6 region. A Phosphoserine modification is found at Ser-360. Positions Pro-363–Cys-409 are interaction with AP2B1. Thr-382 bears the Phosphothreonine mark. Residues Asp-385–Arg-395 carry the [DE]-X(1,2)-F-X-X-[FL]-X-X-X-R motif motif.

It belongs to the arrestin family. In terms of assembly, homooligomer; the self-association is mediated by InsP6-binding. Heterooligomer with ARRB1; the association is mediated by InsP6-binding. Interacts with ADRB2 and CHRM2. Interacts with PDE4A. Interacts with PDE4D. Interacts with MAPK10, MAPK1 and MAPK3. Interacts with DRD2. Interacts with FSHR. Interacts with CLTC. Interacts with HTR2C. Interacts with CCR5. Interacts with CXCR4. Interacts with SRC. Interacts with DUSP16; the interaction is interrupted by stimulation of AGTR1 and activation of MAPK10. Interacts with CHUK; the interaction is enhanced stimulation of ADRB2. Interacts with RELA. Interacts with MDM2; the interaction is enhanced by activation of GPCRs. Interacts with SLC9A5. Interacts with TRAF6. Interacts with IGF1R. Interacts with ENG. Interacts with KIR2DL1, KIR2DL3 and KIR2DL4. Interacts with LDLR. Interacts with AP2B1. Interacts with C5AR1. Interacts with RAF1. Interacts with MAP2K1. Interacts with MAPK1. Interacts with MAPK10; the interaction enhances MAPK10 activation by MAP3K5. Interacts with MAP2K4; the interaction is enhanced by presence of MAP3K5 and MAPK10. Interacts with MAP3K5. Interacts with AKT1. Interacts with IKBKB and MAP3K14. Interacts with SMO (activated). Interacts with GSK3A and GSK3B. Associates with protein phosphatase 2A (PP2A). Interacts with DHX8; the interaction is detected in the nucleus upon OR1D2 stimulation. Interacts with GAPDHS; the interaction is detected in the nucleus upon OR1D2 stimulation. Interacts with H2AFX; the interaction is detected in the nucleus upon OR1D2 stimulation. Interacts with KIF14; the interaction is detected in the nucleus upon OR1D2 stimulation. Interacts with RCC1; the interaction is detected in the nucleus upon OR1D2 stimulation. Interacts with CXCR4; the interaction is dependent on C-terminal phosphorylation of CXCR4 and allows activation of MAPK1 and MAPK3. Interacts with GPR143. Interacts with HCK and CXCR1 (phosphorylated). Interacts with ACKR3 and ACKR4. Interacts with ARRDC1; the interaction is direct. Interacts with GPR61, GPR62 and GPR135. Interacts (via NACHT and LRR domains) with NLRP3; this interaction is direct and inducible by omega-3 polyunsaturated fatty acids (PUFAs). Interacts with FFAR4 (via C-terminus); this interaction is stimulated by long-chain fatty acids (LCFAs). Interacts with GPR35. Interacts with GPR84. Interacts with TIGIT; this interaction inhibits the NF-kappa-B pathway. Interacts with TGFBR3. Post-translationally, phosphorylated at Thr-382 in the cytoplasm; probably dephosphorylated at the plasma membrane. The phosphorylation does not regulate internalization and recycling of ADRB2, interaction with clathrin or AP2B1. The ubiquitination status appears to regulate the formation and trafficking of beta-arrestin-GPCR complexes and signaling. Ubiquitination appears to occur GPCR-specific. Ubiquitinated by MDM2; the ubiquitination is required for rapid internalization of ADRB2. Deubiquitinated by USP33; the deubiquitination leads to a dissociation of the beta-arrestin-GPCR complex. Stimulation of a class A GPCR, such as ADRB2, induces transient ubiquitination and subsequently promotes association with USP33. Stimulation of a class B GPCR promotes a sustained ubiquitination. Deubiquitinated by USP20; allowing USP20 to deubiquitinate TRAF6 leading to inhibition of NF-kappa-B signaling. In terms of processing, hydroxylation by PHD2 modulates the rate of internalization by slowing down recruitment to the plasma membrane and inhibiting subsequent co-internalization with class A receptors.

It is found in the cytoplasm. The protein localises to the nucleus. It localises to the cell membrane. The protein resides in the membrane. Its subcellular location is the clathrin-coated pit. It is found in the cytoplasmic vesicle. Functions in regulating agonist-mediated G-protein coupled receptor (GPCR) signaling by mediating both receptor desensitization and resensitization processes. During homologous desensitization, beta-arrestins bind to the GPRK-phosphorylated receptor and sterically preclude its coupling to the cognate G-protein; the binding appears to require additional receptor determinants exposed only in the active receptor conformation. The beta-arrestins target many receptors for internalization by acting as endocytic adapters (CLASPs, clathrin-associated sorting proteins) and recruiting the GPRCs to the adapter protein 2 complex 2 (AP-2) in clathrin-coated pits (CCPs). However, the extent of beta-arrestin involvement appears to vary significantly depending on the receptor, agonist and cell type. Internalized arrestin-receptor complexes traffic to intracellular endosomes, where they remain uncoupled from G-proteins. Two different modes of arrestin-mediated internalization occur. Class A receptors, like ADRB2, OPRM1, ENDRA, D1AR and ADRA1B dissociate from beta-arrestin at or near the plasma membrane and undergo rapid recycling. Class B receptors, like AVPR2, AGTR1, NTSR1, TRHR and TACR1 internalize as a complex with arrestin and traffic with it to endosomal vesicles, presumably as desensitized receptors, for extended periods of time. Receptor resensitization then requires that receptor-bound arrestin is removed so that the receptor can be dephosphorylated and returned to the plasma membrane. Mediates endocytosis of CCR7 following ligation of CCL19 but not CCL21. Involved in internalization of P2RY1, P2RY4, P2RY6 and P2RY11 and ATP-stimulated internalization of P2RY2. Involved in phosphorylation-dependent internalization of OPRD1 and subsequent recycling or degradation. Involved in ubiquitination of IGF1R. Beta-arrestins function as multivalent adapter proteins that can switch the GPCR from a G-protein signaling mode that transmits short-lived signals from the plasma membrane via small molecule second messengers and ion channels to a beta-arrestin signaling mode that transmits a distinct set of signals that are initiated as the receptor internalizes and transits the intracellular compartment. Acts as a signaling scaffold for MAPK pathways such as MAPK1/3 (ERK1/2) and MAPK10 (JNK3). ERK1/2 and JNK3 activated by the beta-arrestin scaffold are largely excluded from the nucleus and confined to cytoplasmic locations such as endocytic vesicles, also called beta-arrestin signalosomes. Acts as a signaling scaffold for the AKT1 pathway. GPCRs for which the beta-arrestin-mediated signaling relies on both ARRB1 and ARRB2 (codependent regulation) include ADRB2, F2RL1 and PTH1R. For some GPCRs the beta-arrestin-mediated signaling relies on either ARRB1 or ARRB2 and is inhibited by the other respective beta-arrestin form (reciprocal regulation). Increases ERK1/2 signaling in AGTR1- and AVPR2-mediated activation (reciprocal regulation). Involved in CCR7-mediated ERK1/2 signaling involving ligand CCL19. Is involved in type-1A angiotensin II receptor/AGTR1-mediated ERK activity. Is involved in type-1A angiotensin II receptor/AGTR1-mediated MAPK10 activity. Is involved in dopamine-stimulated AKT1 activity in the striatum by disrupting the association of AKT1 with its negative regulator PP2A. Involved in AGTR1-mediated chemotaxis. Appears to function as signaling scaffold involved in regulation of MIP-1-beta-stimulated CCR5-dependent chemotaxis. Involved in attenuation of NF-kappa-B-dependent transcription in response to GPCR or cytokine stimulation by interacting with and stabilizing CHUK. Suppresses UV-induced NF-kappa-B-dependent activation by interacting with CHUK. The function is promoted by stimulation of ADRB2 and dephosphorylation of ARRB2. Involved in p53/TP53-mediated apoptosis by regulating MDM2 and reducing the MDM2-mediated degradation of p53/TP53. May serve as nuclear messenger for GPCRs. Upon stimulation of OR1D2, may be involved in regulation of gene expression during the early processes of fertilization. Also involved in regulation of receptors other than GPCRs. Involved in endocytosis of TGFBR2 and TGFBR3 and down-regulates TGF-beta signaling such as NF-kappa-B activation. Involved in endocytosis of low-density lipoprotein receptor/LDLR. Involved in endocytosis of smoothened homolog/Smo, which also requires GRK2. Involved in endocytosis of SLC9A5. Involved in endocytosis of ENG and subsequent TGF-beta-mediated ERK activation and migration of epithelial cells. Involved in Toll-like receptor and IL-1 receptor signaling through the interaction with TRAF6 which prevents TRAF6 autoubiquitination and oligomerization required for activation of NF-kappa-B and JUN. Involved in insulin resistance by acting as insulin-induced signaling scaffold for SRC, AKT1 and INSR. Involved in regulation of inhibitory signaling of natural killer cells by recruiting PTPN6 and PTPN11 to KIR2DL1. Involved in IL8-mediated granule release in neutrophils. Involved in the internalization of the atypical chemokine receptor ACKR3. Acts as an adapter protein coupling FFAR4 receptor to specific downstream signaling pathways, as well as mediating receptor endocytosis. During the activation step of NLRP3 inflammasome, directly associates with NLRP3 leading to inhibition of pro-inflammatory cytokine release and inhibition of inflammation. The sequence is that of Beta-arrestin-2 (ARRB2) from Homo sapiens (Human).